The following is a 100-amino-acid chain: Integration host factor subunit alpha (100 aa).

The segment at 53–72 is disordered; sequence FDLRDKKQRPGRNPKTGEEI.

It belongs to the bacterial histone-like protein family. Heterodimer of an alpha and a beta chain.

Functionally, this protein is one of the two subunits of integration host factor, a specific DNA-binding protein that functions in genetic recombination as well as in transcriptional and translational control. This Marinobacter nauticus (strain ATCC 700491 / DSM 11845 / VT8) (Marinobacter aquaeolei) protein is Integration host factor subunit alpha.